We begin with the raw amino-acid sequence, 394 residues long: Probable fatty acid methyltransferase (394 aa).

S-adenosyl-L-methionine contacts are provided by residues 128-129 (YS), 163-171 (LLDVGCGWG), and 189-194 (TLSKEQ). The active site involves cysteine 358.

This sequence belongs to the CFA/CMAS family.

This Pseudomonas putida (Arthrobacter siderocapsulatus) protein is Probable fatty acid methyltransferase.